A 198-amino-acid polypeptide reads, in one-letter code: Large ribosomal subunit protein uL24c (198 aa).

The N-terminal 50 residues, 1–50 (MATMSALQSSFTSLSLSPSSSFLGQRLISPISLSVTSPVKPAENPCLVLA), are a transit peptide targeting the chloroplast.

The protein belongs to the universal ribosomal protein uL24 family. Part of the 50S ribosomal subunit.

The protein resides in the plastid. The protein localises to the chloroplast. Functionally, one of two assembly initiator proteins, it binds directly to the 5'-end of the 23S rRNA, where it nucleates assembly of the 50S subunit. Required for optimal plastid performance in terms of photosynthesis and growth. Required for the translation of plastid mRNAs. Plays a critical role in biosynthesis of thylakoid membrane proteins encoded by chloroplast genes. The protein is Large ribosomal subunit protein uL24c (RPL24) of Arabidopsis thaliana (Mouse-ear cress).